The primary structure comprises 160 residues: Phosphopantetheine adenylyltransferase (160 aa).

T9 serves as a coordination point for substrate. Residues 9–10 (TF) and H17 each bind ATP. K41, L73, and R87 together coordinate substrate. ATP is bound by residues 88–90 (GLR), E98, and 123–129 (FSYTSSS).

This sequence belongs to the bacterial CoaD family. In terms of assembly, homohexamer. Mg(2+) serves as cofactor.

It localises to the cytoplasm. The enzyme catalyses (R)-4'-phosphopantetheine + ATP + H(+) = 3'-dephospho-CoA + diphosphate. The protein operates within cofactor biosynthesis; coenzyme A biosynthesis; CoA from (R)-pantothenate: step 4/5. Its function is as follows. Reversibly transfers an adenylyl group from ATP to 4'-phosphopantetheine, yielding dephospho-CoA (dPCoA) and pyrophosphate. The polypeptide is Phosphopantetheine adenylyltransferase (Opitutus terrae (strain DSM 11246 / JCM 15787 / PB90-1)).